Consider the following 507-residue polypeptide: Probable D-lactate dehydrogenase, mitochondrial (507 aa).

Residues 1-52 (MARLLRSATWELFPWRGYCSQKAKGELCRDFVEALKAVVGGSHVSTAAVVRE) constitute a mitochondrion transit peptide. At Lys-36 the chain carries N6-acetyllysine. An FAD-binding PCMH-type domain is found at 62-265 (RCEPPDAVVW…TATTLRLHPA (204 aa)). An N6-acetyllysine modification is found at Lys-315. Lys-358 carries the post-translational modification N6-acetyllysine; alternate. The residue at position 358 (Lys-358) is an N6-succinyllysine; alternate. An N6-acetyllysine mark is found at Lys-445 and Lys-472.

It belongs to the FAD-binding oxidoreductase/transferase type 4 family. In terms of assembly, interacts with CSRP3. The cofactor is FAD. In terms of tissue distribution, expressed moderately in heart and liver and at lower levels in skeletal muscle and kidney.

The protein resides in the mitochondrion. The enzyme catalyses (R)-lactate + 2 Fe(III)-[cytochrome c] = 2 Fe(II)-[cytochrome c] + pyruvate + 2 H(+). In terms of biological role, involved in D-lactate, but not L-lactate catabolic process. The polypeptide is Probable D-lactate dehydrogenase, mitochondrial (Homo sapiens (Human)).